The sequence spans 142 residues: Large ribosomal subunit protein uL29 (142 aa).

This sequence belongs to the universal ribosomal protein uL29 family.

This Theileria annulata protein is Large ribosomal subunit protein uL29 (RPL35).